A 141-amino-acid chain; its full sequence is VLSSADKNNIKATWDKIGSHAGEYGAEALERTFISFPTTKTYFPHFDLSHGSAQVKAHGKKVADALTLAVGHLEDLPNALSALSDLHAYKLRVDPVNFKLLSHCLLVTLACHHPAEFTPAVHSALDKFFSAVSTVLTSKYR.

The region spanning 1–141 (VLSSADKNNI…VSTVLTSKYR (141 aa)) is the Globin domain. Position 3 is a phosphoserine (Ser3). 2 positions are modified to N6-succinyllysine: Lys7 and Lys11. N6-acetyllysine; alternate is present on Lys16. The residue at position 16 (Lys16) is an N6-succinyllysine; alternate. Tyr24 is modified (phosphotyrosine). At Ser35 the chain carries Phosphoserine. Lys40 carries the post-translational modification N6-succinyllysine. Position 49 is a phosphoserine (Ser49). O2 is bound at residue His58. His87 is a binding site for heme b. Position 102 is a phosphoserine (Ser102). 3 positions are modified to phosphothreonine: Thr108, Thr134, and Thr137. The residue at position 138 (Ser138) is a Phosphoserine.

The protein belongs to the globin family. As to quaternary structure, heterotetramer of two alpha chains and two beta chains. In terms of tissue distribution, red blood cells.

In terms of biological role, involved in oxygen transport from the lung to the various peripheral tissues. Hemopressin acts as an antagonist peptide of the cannabinoid receptor CNR1. Hemopressin-binding efficiently blocks cannabinoid receptor CNR1 and subsequent signaling. This is Hemoglobin subunit alpha (HBA) from Paguma larvata (Masked palm civet).